The primary structure comprises 344 residues: L-rhamnose-proton symporter (344 aa).

10 consecutive transmembrane segments (helical) span residues 4–24 (AITMGIFWHLIGAASAACFYA), 38–58 (WSVGGIVSWIILPWAISALLL), 68–88 (FSLSTLLPVFLFGAMWGIGNI), 101–121 (MGIGIAIGITLIVGTLMTPII), 137–157 (TLLGVLVALIGVGIVTRAGQL), 175–195 (LVLAVMCGIFSAGMSFAMNAA), 214–234 (LPSYVVIMGGGAIINLGFCFI), 259–279 (VLLSTLGGLMWYLQFFFYAWG), 290–310 (ISWMLHMSFYVLCGGIVGLVL), and 323–343 (VLSLGCVVIIVAANIVGIGMA).

The protein belongs to the L-rhamnose transporter (TC 2.A.7.6) family.

It is found in the cell inner membrane. The catalysed reaction is L-rhamnopyranose(in) + H(+)(in) = L-rhamnopyranose(out) + H(+)(out). In terms of biological role, uptake of L-rhamnose across the cytoplasmic membrane with the concomitant transport of protons into the cell (symport system). The protein is L-rhamnose-proton symporter of Escherichia coli (strain ATCC 8739 / DSM 1576 / NBRC 3972 / NCIMB 8545 / WDCM 00012 / Crooks).